The chain runs to 480 residues: Ribosomal protein uS12 methylthiotransferase RimO (480 aa).

One can recognise an MTTase N-terminal domain in the interval 37-147 (NRIGFVSLGC…VLKHVHKYVP (111 aa)). The [4Fe-4S] cluster site is built by Cys46, Cys82, Cys111, Cys179, Cys183, and Cys186. The Radical SAM core domain maps to 165–402 (LTPKHYAYLK…MEVQAEISAE (238 aa)). The 67-residue stretch at 405–471 (ARFVGRTMDI…EHDLWAELVD (67 aa)) folds into the TRAM domain.

The protein belongs to the methylthiotransferase family. RimO subfamily. It depends on [4Fe-4S] cluster as a cofactor.

The protein resides in the cytoplasm. The catalysed reaction is L-aspartate(89)-[ribosomal protein uS12]-hydrogen + (sulfur carrier)-SH + AH2 + 2 S-adenosyl-L-methionine = 3-methylsulfanyl-L-aspartate(89)-[ribosomal protein uS12]-hydrogen + (sulfur carrier)-H + 5'-deoxyadenosine + L-methionine + A + S-adenosyl-L-homocysteine + 2 H(+). Catalyzes the methylthiolation of an aspartic acid residue of ribosomal protein uS12. The polypeptide is Ribosomal protein uS12 methylthiotransferase RimO (Shewanella sp. (strain ANA-3)).